A 2833-amino-acid chain; its full sequence is Reticulocyte-binding protein 1 (2833 aa).

Residues 1 to 22 (MKRGICLAALLCLFNYLGAGHG) form the signal peptide. The segment covering 75-91 (ETDNASGKDAEGSRPSH) has biased composition (basic and acidic residues). 3 disordered regions span residues 75–95 (ETDN…DSSF), 112–133 (HVKE…KENE), and 819–860 (KHKQ…NFSR). A compositionally biased stretch (basic and acidic residues) spans 819-836 (KHKQNRSEKEEEYFKNES). Residues 837 to 849 (VEEDLSREETEEQ) are compositionally biased toward acidic residues. Residues 2563–2565 (RGD) carry the Cell attachment site motif. Residues 2619–2755 (EMNSKKSAIE…GTYQDTSNSS (137 aa)) are disordered. Composition is skewed to basic and acidic residues over residues 2621 to 2633 (NSKK…EKTA) and 2640 to 2652 (ENNR…RARV). Positions 2655–2670 (MSMNNDPTQSETTHSE) are enriched in polar residues. Acidic residues predominate over residues 2706–2720 (LEEEETTAPMEETEM). Residues 2731-2742 (TRSDEPDMHTEN) show a composition bias toward basic and acidic residues. Over residues 2743–2755 (TQDGTYQDTSNSS) the composition is skewed to polar residues.

As to quaternary structure, homodimer.

Its subcellular location is the membrane. Its function is as follows. Involved in reticulocyte adhesion. Specifically binds to human reticulocyte cells. The sequence is that of Reticulocyte-binding protein 1 (RBP1) from Plasmodium vivax (strain Belem).